The sequence spans 64 residues: Large ribosomal subunit protein bL35 (64 aa).

Belongs to the bacterial ribosomal protein bL35 family.

This Shewanella sediminis (strain HAW-EB3) protein is Large ribosomal subunit protein bL35.